The primary structure comprises 65 residues: MPKMKSNRAAAKRFKRTANGGFKSGNSFTSHRFHGKTKKQRRQLRGLSMMDKTNVKRYKKLLPFK.

Positions 1–52 (MPKMKSNRAAAKRFKRTANGGFKSGNSFTSHRFHGKTKKQRRQLRGLSMMDK) are disordered. Over residues 31 to 44 (HRFHGKTKKQRRQL) the composition is skewed to basic residues.

This sequence belongs to the bacterial ribosomal protein bL35 family.

The protein is Large ribosomal subunit protein bL35 of Limosilactobacillus reuteri (strain DSM 20016) (Lactobacillus reuteri).